A 313-amino-acid chain; its full sequence is Ribosomal RNA small subunit methyltransferase H (313 aa).

Residues 35–37 (GGH), Asp-55, Phe-79, Asp-100, and Gln-107 contribute to the S-adenosyl-L-methionine site.

It belongs to the methyltransferase superfamily. RsmH family.

It localises to the cytoplasm. It carries out the reaction cytidine(1402) in 16S rRNA + S-adenosyl-L-methionine = N(4)-methylcytidine(1402) in 16S rRNA + S-adenosyl-L-homocysteine + H(+). Specifically methylates the N4 position of cytidine in position 1402 (C1402) of 16S rRNA. The protein is Ribosomal RNA small subunit methyltransferase H of Burkholderia orbicola (strain MC0-3).